The following is a 353-amino-acid chain: Phospho-N-acetylmuramoyl-pentapeptide-transferase (353 aa).

A run of 10 helical transmembrane segments spans residues 24-44 (LGFF…ILWA), 66-86 (TPTM…VLCA), 88-108 (LGNL…FVGF), 129-149 (FGML…KGLD), 160-180 (PLFE…FLST), 192-212 (GLAS…VYVA), 229-249 (VGEL…FLWY), 256-276 (VFMG…NAIV), 281-301 (ILLV…ILQV), and 330-350 (KVIV…LLSL).

It belongs to the glycosyltransferase 4 family. MraY subfamily. Mg(2+) serves as cofactor.

It localises to the cell inner membrane. It catalyses the reaction UDP-N-acetyl-alpha-D-muramoyl-L-alanyl-gamma-D-glutamyl-meso-2,6-diaminopimeloyl-D-alanyl-D-alanine + di-trans,octa-cis-undecaprenyl phosphate = di-trans,octa-cis-undecaprenyl diphospho-N-acetyl-alpha-D-muramoyl-L-alanyl-D-glutamyl-meso-2,6-diaminopimeloyl-D-alanyl-D-alanine + UMP. The protein operates within cell wall biogenesis; peptidoglycan biosynthesis. Functionally, catalyzes the initial step of the lipid cycle reactions in the biosynthesis of the cell wall peptidoglycan: transfers peptidoglycan precursor phospho-MurNAc-pentapeptide from UDP-MurNAc-pentapeptide onto the lipid carrier undecaprenyl phosphate, yielding undecaprenyl-pyrophosphoryl-MurNAc-pentapeptide, known as lipid I. This is Phospho-N-acetylmuramoyl-pentapeptide-transferase from Helicobacter pylori (strain Shi470).